We begin with the raw amino-acid sequence, 1468 residues long: Potassium channel K2 (1468 aa).

A run of 6 helical transmembrane segments spans residues 48 to 68 (MIYI…YWIY), 146 to 165 (FNCY…WYIS), 185 to 209 (IYIY…IISY), 221 to 240 (LLID…RHFF), 246 to 264 (IDIY…FLNV), and 285 to 306 (IILG…IQGI). The pore-forming intramembrane region spans 326-344 (YFYFSIISISTVGYGDIIP). Residues 351–368 (VICIFFIFWTFIWVPIQF) traverse the membrane as a helical segment. Residues 804-823 (TCARTNESHKNNRLRSRRSQ) form a disordered region. Positions 814–823 (NNRLRSRRSQ) are enriched in basic residues. Positions 1141 to 1185 (KSNKNSNNNNKCEQIKQLNNNLTFKKNEKKTKSNKQNTNDTLERR) form a coiled coil.

The protein localises to the membrane. Its function is as follows. May be involved in transmembrane potassium transport at the subcellular level not affecting bulk potassium transport across the plasma membrane. In Plasmodium berghei (strain Anka), this protein is Potassium channel K2.